A 335-amino-acid polypeptide reads, in one-letter code: Pyridoxal 5'-phosphate synthase subunit PdxS (335 aa).

Asp59 provides a ligand contact to D-ribose 5-phosphate. The active-site Schiff-base intermediate with D-ribose 5-phosphate is the Lys116. Residue Gly188 coordinates D-ribose 5-phosphate. D-glyceraldehyde 3-phosphate is bound at residue Lys200. Residues Gly253 and 274–275 (GS) contribute to the D-ribose 5-phosphate site.

It belongs to the PdxS/SNZ family. In terms of assembly, in the presence of PdxT, forms a dodecamer of heterodimers.

It catalyses the reaction aldehydo-D-ribose 5-phosphate + D-glyceraldehyde 3-phosphate + L-glutamine = pyridoxal 5'-phosphate + L-glutamate + phosphate + 3 H2O + H(+). It functions in the pathway cofactor biosynthesis; pyridoxal 5'-phosphate biosynthesis. Functionally, catalyzes the formation of pyridoxal 5'-phosphate from ribose 5-phosphate (RBP), glyceraldehyde 3-phosphate (G3P) and ammonia. The ammonia is provided by the PdxT subunit. Can also use ribulose 5-phosphate and dihydroxyacetone phosphate as substrates, resulting from enzyme-catalyzed isomerization of RBP and G3P, respectively. In Hyperthermus butylicus (strain DSM 5456 / JCM 9403 / PLM1-5), this protein is Pyridoxal 5'-phosphate synthase subunit PdxS.